Reading from the N-terminus, the 338-residue chain is MIVVLKPGSTEEDIRKVVKLAESYNLKCHISKGQERTVIGIIGDDRYVVADKFESLDCVESVVRVLKPYKLVSREFHPEDTVIDLGDVKIGNGYFTIIAGPCSVEGREMLMETAHFLSELGVKVLRGGAYKPRTSPYSFQGLGEKGLEYLREAADKYGMYVVTEALGEDDLPKVAEYADIIQIGARNAQNFRLLSKAGSYNKPVLLKRGFMNTIEEFLLSAEYIANSGNTKIILCERGIRTFEKATRNTLDISAVPIIRKESHLPILVDPSHSGGRRDLVIPLSRAAIAVGAHGIIVEVHPEPEKALSDGKQSLDFELFKELVQEMKKLADALGVKVN.

Belongs to the class-I DAHP synthase family. As to quaternary structure, homotetramer. It depends on a divalent metal cation as a cofactor.

It carries out the reaction D-erythrose 4-phosphate + phosphoenolpyruvate + H2O = 7-phospho-2-dehydro-3-deoxy-D-arabino-heptonate + phosphate. It functions in the pathway metabolic intermediate biosynthesis; chorismate biosynthesis; chorismate from D-erythrose 4-phosphate and phosphoenolpyruvate: step 1/7. Its activity is regulated as follows. Inhibited by L-phenylalanine and L-tyrosine. Functionally, catalyzes the condensation of phosphoenolpyruvate (PEP) and D-erythrose-4-phosphate (E4P) giving rise to 3-deoxy-D-arabino-heptulosonate-7-phosphate (DAHP). This is Phospho-2-dehydro-3-deoxyheptonate aldolase (aroF) from Thermotoga maritima (strain ATCC 43589 / DSM 3109 / JCM 10099 / NBRC 100826 / MSB8).